Reading from the N-terminus, the 1012-residue chain is Structural polyprotein (1012 aa).

Position 30 (aspartate 30) interacts with a divalent metal cation. The Peptidase S50 domain occupies 513-755 (ADKGYEVVAN…AGRQYHLAMA (243 aa)). The Nucleophile role is filled by serine 652. Lysine 692 is a catalytic residue. Residues 969–1012 (AMEMKHRNPRRALPKPKPKPNAPTQRPPGRLGRWIRTVSDEDLE) are disordered. Residues 975-986 (RNPRRALPKPKP) show a composition bias toward basic residues. The interaction with VP1 protein stretch occupies residues 1003 to 1012 (IRTVSDEDLE).

In terms of assembly, homotrimer. A central divalent metal stabilizes the VP2 trimer. Interacts with host ITGA4/ITGB1. As to quaternary structure, homodimer. Interacts (via C-terminus) with VP1 in the cytoplasm. Interacts with VP2. In terms of processing, specific enzymatic cleavages yield mature proteins. The capsid assembly seems to be regulated by polyprotein processing. The protease VP4 cleaves itself off the polyprotein, thus releasing pre-VP2 and VP3 within the infected cell. During capsid assembly, the C-terminus of pre-VP2 is further processed by VP4, giving rise to VP2, the external capsid protein and three small peptides that all stay closely associated with the capsid.

The protein resides in the virion. Its subcellular location is the host cytoplasm. Functionally, capsid protein VP2 self assembles to form an icosahedral capsid with a T=13 symmetry, about 70 nm in diameter, and consisting of 260 VP2 trimers. The capsid encapsulates the genomic dsRNA. VP2 is also involved in attachment and entry into the host cell by interacting with host ITGA4/ITGB1. In terms of biological role, the precursor of VP2 plays an important role in capsid assembly. First, pre-VP2 and VP2 oligomers assemble to form a procapsid. Then, the pre-VP2 intermediates may be processed into VP2 proteins by proteolytic cleavage mediated by VP4 to obtain the mature virion. The final capsid is composed of pentamers and hexamers but VP2 has a natural tendency to assemble into all-pentameric structures. Therefore pre-VP2 may be required to allow formation of the hexameric structures. Its function is as follows. Protease VP4 is a serine protease that cleaves the polyprotein into its final products. Pre-VP2 is first partially cleaved, and may be completely processed by VP4 upon capsid maturation. Capsid protein VP3 plays a key role in virion assembly by providing a scaffold for the capsid made of VP2. May self-assemble to form a T=4-like icosahedral inner-capsid composed of at least 180 trimers. Plays a role in genomic RNA packaging by recruiting VP1 into the capsid and interacting with the dsRNA genome segments to form a ribonucleoprotein complex. Additionally, the interaction of the VP3 C-terminal tail with VP1 removes the inherent structural blockade of the polymerase active site. Thus, VP3 can also function as a transcriptional activator. Functionally, structural peptide 1 is a small peptide derived from pre-VP2 C-terminus. It destabilizes and perforates cell membranes, suggesting a role during entry. In terms of biological role, structural peptide 2 is a small peptide derived from pVP2 C-terminus. It is not essential for the virus viability, but viral growth is affected when missing. Its function is as follows. Structural peptide 3 is a small peptide derived from pVP2 C-terminus. It is not essential for the virus viability, but viral growth is affected when missing. Structural peptide 4 is a small peptide derived from pVP2 C-terminus. It is essential for the virus viability. The sequence is that of Structural polyprotein from Avian infectious bursal disease virus (strain Cu-1) (IBDV).